The primary structure comprises 104 residues: Fusaric acid biosynthesis protein 2 (104 aa).

It belongs to the YciI family.

Its pathway is mycotoxin biosynthesis. Its function is as follows. Part of the gene cluster that mediates the biosynthesis of fusaric acid, a mycotoxin with low to moderate toxicity to animals and humans, but with high phytotoxic properties. L-aspartate is suggested as fusaric acid amino acid precursor that is activated and further processed to O-acetyl-L-homoserine by cluster enzymes aspartate kinase FUB3 and homoserine O-acetyltransferase FUB5, as well as enzymes of the primary metabolism. The polyketide synthase (PKS) FUB1 generates the triketide trans-2-hexenal which is presumptively released by the hydrolase FUB4 and linked to the NRPS-bound amino acid precursor by NAD(P)-dependent dehydrogenase FUB6. FUB1, FUB4, and the non-canonical NRPS Fub8 may form an enzyme complex. Further processing of the NRPS-bound intermediate might be carried out by FUB6 and the sulfhydrylase FUB7, enabling a spontaneous electrocyclization to close the carbon backbone of fusaric acid. Dihydrofusaric acid is likely to be released via reduction by the thioester reductase (TR) domain of FUB8 whereupon the final oxidation to fusaric acid may (also) be performed by the FMN-dependent dehydrogenase FUB9. In Gibberella fujikuroi (strain CBS 195.34 / IMI 58289 / NRRL A-6831) (Bakanae and foot rot disease fungus), this protein is Fusaric acid biosynthesis protein 2.